The primary structure comprises 459 residues: Putrescine aminotransferase (459 aa).

Pyridoxal 5'-phosphate is bound by residues 150 to 151 (GT) and Q274. K300 is subject to N6-(pyridoxal phosphate)lysine. Residue T332 coordinates pyridoxal 5'-phosphate.

The protein belongs to the class-III pyridoxal-phosphate-dependent aminotransferase family. Putrescine aminotransferase subfamily. It depends on pyridoxal 5'-phosphate as a cofactor.

The enzyme catalyses an alkane-alpha,omega-diamine + 2-oxoglutarate = an omega-aminoaldehyde + L-glutamate. It catalyses the reaction putrescine + 2-oxoglutarate = 1-pyrroline + L-glutamate + H2O. It carries out the reaction cadaverine + 2-oxoglutarate = 5-aminopentanal + L-glutamate. The protein operates within amine and polyamine degradation; putrescine degradation; 4-aminobutanal from putrescine (transaminase route): step 1/1. Its function is as follows. Catalyzes the aminotransferase reaction from putrescine to 2-oxoglutarate, leading to glutamate and 4-aminobutanal, which spontaneously cyclizes to form 1-pyrroline. This is the first step in one of two pathways for putrescine degradation, where putrescine is converted into 4-aminobutanoate (gamma-aminobutyrate or GABA) via 4-aminobutanal. Also functions as a cadaverine transaminase in a a L-lysine degradation pathway to succinate that proceeds via cadaverine, glutarate and L-2-hydroxyglutarate. This is Putrescine aminotransferase from Shigella flexneri serotype 5b (strain 8401).